Here is a 359-residue protein sequence, read N- to C-terminus: Acetoin catabolism protein X (359 aa).

The protein localises to the cell membrane. The protein operates within ketone degradation; acetoin degradation. Functionally, essential for acetoin catabolism. The protein is Acetoin catabolism protein X (acoX) of Cupriavidus necator (strain ATCC 17699 / DSM 428 / KCTC 22496 / NCIMB 10442 / H16 / Stanier 337) (Ralstonia eutropha).